Here is a 244-residue protein sequence, read N- to C-terminus: tRNA (guanine-N(7)-)-methyltransferase (244 aa).

A disordered region spans residues 1-24 (MTDSHVPHPESPAVEEGEERPHRR). Glutamate 74, glutamate 99, aspartate 126, and aspartate 149 together coordinate S-adenosyl-L-methionine. Aspartate 149 is a catalytic residue. Substrate contacts are provided by residues lysine 153, aspartate 185, and 222–225 (TKFE).

It belongs to the class I-like SAM-binding methyltransferase superfamily. TrmB family.

The enzyme catalyses guanosine(46) in tRNA + S-adenosyl-L-methionine = N(7)-methylguanosine(46) in tRNA + S-adenosyl-L-homocysteine. The protein operates within tRNA modification; N(7)-methylguanine-tRNA biosynthesis. Functionally, catalyzes the formation of N(7)-methylguanine at position 46 (m7G46) in tRNA. The polypeptide is tRNA (guanine-N(7)-)-methyltransferase (Pseudomonas syringae pv. syringae (strain B728a)).